Consider the following 372-residue polypeptide: B2 bradykinin receptor (372 aa).

The Extracellular segment spans residues 1 to 34 (MFNITSQVSALNATLAQGNSCLDAEWWSWLNTIQ). Asparagine 3 and asparagine 12 each carry an N-linked (GlcNAc...) asparagine glycan. The helical transmembrane segment at 35–58 (APFLWVLFVLAVLENIFVLSVFFL) threads the bilayer. Residues 59–67 (HKSSCTVAE) lie on the Cytoplasmic side of the membrane. The helical transmembrane segment at 68-92 (IYLGNLAVADLILAFGLPFWAITIA) threads the bilayer. At 93-105 (NNFDWLFGEVLCR) the chain is on the extracellular side. A disulfide bridge connects residues cysteine 104 and cysteine 185. The chain crosses the membrane as a helical span at residues 106-127 (MVNTMIQMNMYSSICFLMLVSI). Residues 128–149 (DRYLALVKTMSMGRMRGVRWAK) are Cytoplasmic-facing. Tyrosine 130 is modified (phosphotyrosine). A helical membrane pass occupies residues 150 to 172 (LYSLVIWGCALLLSSPMLVFRTM). Over 173–195 (KDYRDEGHNVTACLIIYPSLTWQ) the chain is Extracellular. Asparagine 181 carries N-linked (GlcNAc...) asparagine glycosylation. A helical membrane pass occupies residues 196–222 (VFTNVLLNLVGFLLPLSIITFCTVQIM). Over 223 to 241 (QVLRNNEMQKFKEIQTERR) the chain is Cytoplasmic. Residues 242 to 266 (ATVLVLAVLLLFVVCWLPFQIGTFL) traverse the membrane as a helical segment. Residues 267 to 284 (DTLRLLGFLPGCWEHVID) are Extracellular-facing. The helical transmembrane segment at 285-308 (LITQISSYLAYSNSCLNPLVYVIV) threads the bilayer. At 309–364 (GKRFRKKSREVYHGLCRSGGCVSEPAQSENSMGTLRTSISVDRQIHKLQDWARSSS) the chain is on the cytoplasmic side. Tyrosine 320 carries the phosphotyrosine modification. A lipid anchor (S-palmitoyl cysteine) is attached at cysteine 324. Residue serine 339 is modified to Phosphoserine. Residue threonine 342 is modified to Phosphothreonine. Phosphoserine; by GRK6 is present on residues serine 346 and serine 348.

Belongs to the G-protein coupled receptor 1 family. Bradykinin receptor subfamily. BDKRB2 sub-subfamily. Forms a complex with PECAM1 and GNAQ. Interacts with PECAM1.

It is found in the cell membrane. Functionally, receptor for bradykinin. It is associated with G proteins that activate a phosphatidylinositol-calcium second messenger system. This Cavia porcellus (Guinea pig) protein is B2 bradykinin receptor (BDKRB2).